The primary structure comprises 99 residues: Small ribosomal subunit protein uS14c (99 aa).

The protein belongs to the universal ribosomal protein uS14 family. Part of the 30S ribosomal subunit.

Its subcellular location is the plastid. It is found in the chloroplast. Functionally, binds 16S rRNA, required for the assembly of 30S particles. The polypeptide is Small ribosomal subunit protein uS14c (Welwitschia mirabilis (Tree tumbo)).